A 315-amino-acid polypeptide reads, in one-letter code: Methionyl-tRNA formyltransferase (315 aa).

113 to 116 lines the (6S)-5,6,7,8-tetrahydrofolate pocket; that stretch reads SLLP.

The protein belongs to the Fmt family.

The catalysed reaction is L-methionyl-tRNA(fMet) + (6R)-10-formyltetrahydrofolate = N-formyl-L-methionyl-tRNA(fMet) + (6S)-5,6,7,8-tetrahydrofolate + H(+). In terms of biological role, attaches a formyl group to the free amino group of methionyl-tRNA(fMet). The formyl group appears to play a dual role in the initiator identity of N-formylmethionyl-tRNA by promoting its recognition by IF2 and preventing the misappropriation of this tRNA by the elongation apparatus. The polypeptide is Methionyl-tRNA formyltransferase (Shigella dysenteriae serotype 1 (strain Sd197)).